The sequence spans 182 residues: Translation initiation factor IF-3 (182 aa).

A disordered region spans residues 1-22 (MPLGDCNISTPDNKQNRKNQEI).

The protein belongs to the IF-3 family. In terms of assembly, monomer.

Its subcellular location is the cytoplasm. Functionally, IF-3 binds to the 30S ribosomal subunit and shifts the equilibrium between 70S ribosomes and their 50S and 30S subunits in favor of the free subunits, thus enhancing the availability of 30S subunits on which protein synthesis initiation begins. This is Translation initiation factor IF-3 from Xanthomonas axonopodis pv. citri (strain 306).